A 1069-amino-acid polypeptide reads, in one-letter code: Carbamoyl phosphate synthase large chain (1069 aa).

The tract at residues 1–401 is carboxyphosphate synthetic domain; sequence MPLNKDIKKV…AFLKGIRSLE (401 aa). R129, R169, G175, G176, K208, V210, E215, G241, I242, H243, Q284, and E298 together coordinate ATP. Residues 133 to 327 enclose the ATP-grasp 1 domain; the sequence is RDMMNRIGEP…IAKLAAKIAL (195 aa). 3 residues coordinate Mg(2+): Q284, E298, and N300. Mn(2+) contacts are provided by Q284, E298, and N300. The segment at 402-549 is oligomerization domain; that stretch reads IGKYSLDHNK…YSTYEQYDEV (148 aa). Positions 550 to 932 are carbamoyl phosphate synthetic domain; it reads EVSNNKKVIV…ALYKGFVGAY (383 aa). The region spanning 674–864 is the ATP-grasp 2 domain; it reads DELLERLGIS…IVDLATQVML (191 aa). Positions 710, 749, 751, 755, 780, 781, 782, 783, 823, and 835 each coordinate ATP. Residues Q823, E835, and N837 each coordinate Mg(2+). Mn(2+) contacts are provided by Q823, E835, and N837. The 138-residue stretch at 932 to 1069 folds into the MGS-like domain; the sequence is YMYPSKEKGK…KDLEVFNIAK (138 aa). The allosteric domain stretch occupies residues 933–1069; sequence MYPSKEKGKI…KDLEVFNIAK (137 aa).

Belongs to the CarB family. As to quaternary structure, composed of two chains; the small (or glutamine) chain promotes the hydrolysis of glutamine to ammonia, which is used by the large (or ammonia) chain to synthesize carbamoyl phosphate. Tetramer of heterodimers (alpha,beta)4. It depends on Mg(2+) as a cofactor. Mn(2+) serves as cofactor.

The catalysed reaction is hydrogencarbonate + L-glutamine + 2 ATP + H2O = carbamoyl phosphate + L-glutamate + 2 ADP + phosphate + 2 H(+). The enzyme catalyses hydrogencarbonate + NH4(+) + 2 ATP = carbamoyl phosphate + 2 ADP + phosphate + 2 H(+). It participates in amino-acid biosynthesis; L-arginine biosynthesis; carbamoyl phosphate from bicarbonate: step 1/1. Its pathway is pyrimidine metabolism; UMP biosynthesis via de novo pathway; (S)-dihydroorotate from bicarbonate: step 1/3. Large subunit of the glutamine-dependent carbamoyl phosphate synthetase (CPSase). CPSase catalyzes the formation of carbamoyl phosphate from the ammonia moiety of glutamine, carbonate, and phosphate donated by ATP, constituting the first step of 2 biosynthetic pathways, one leading to arginine and/or urea and the other to pyrimidine nucleotides. The large subunit (synthetase) binds the substrates ammonia (free or transferred from glutamine from the small subunit), hydrogencarbonate and ATP and carries out an ATP-coupled ligase reaction, activating hydrogencarbonate by forming carboxy phosphate which reacts with ammonia to form carbamoyl phosphate. The polypeptide is Carbamoyl phosphate synthase large chain (Clostridium beijerinckii (strain ATCC 51743 / NCIMB 8052) (Clostridium acetobutylicum)).